The sequence spans 146 residues: Hemoglobin subunit beta (146 aa).

The residue at position 1 (Val-1) is an N-acetylvaline. The Globin domain occupies 2–146 (HLTAEEKAAV…VATALAHKYH (145 aa)). A Phosphothreonine modification is found at Thr-12. Ser-44 carries the post-translational modification Phosphoserine. N6-acetyllysine is present on Lys-59. His-63 provides a ligand contact to heme b. Lys-82 bears the N6-acetyllysine mark. His-92 contributes to the heme b binding site. At Cys-93 the chain carries S-nitrosocysteine. Position 144 is an N6-acetyllysine (Lys-144).

It belongs to the globin family. Heterotetramer of two alpha chains and two beta chains. As to expression, red blood cells.

In terms of biological role, involved in oxygen transport from the lung to the various peripheral tissues. The chain is Hemoglobin subunit beta (HBB) from Mustela lutreola (European mink).